Consider the following 676-residue polypeptide: Beta-galactosidase BgaP (676 aa).

Arginine 112 serves as a coordination point for substrate. Cysteine 116 serves as a coordination point for Zn(2+). Asparagine 150 provides a ligand contact to substrate. Catalysis depends on glutamate 151, which acts as the Proton donor. Zn(2+)-binding residues include cysteine 156, cysteine 158, and cysteine 161. The active-site Nucleophile is the glutamate 308. Substrate contacts are provided by residues tryptophan 316 and 356–359 (EKYH).

It belongs to the glycosyl hydrolase 42 family. As to quaternary structure, homodimer.

The catalysed reaction is Hydrolysis of terminal non-reducing beta-D-galactose residues in beta-D-galactosides.. With respect to regulation, no activity lost during treatment with 100 mM EDTA after 2 hours, and the addition of 1 mM MgCl(2), 1 mM CaCl(2) or 1 mM MnCl(2) has no effect. However, the enzyme activity is inhibited by Zn(2+), Cu(2+), Ni(2+) and Co(2+) to different extents. Addition of Na(+) or K(+) slightly stimulates the enzyme activity at low concentrations and the optimal concentration is 250 mM. A further increase of their concentration of ions above the optimum value results in a decrease in enzyme activity. The enzyme is still active even in the presence of Na(+) or K(+) at a concentration up to 5 M. Its function is as follows. Hydrolyzes lactose, o-nitrophenyl-beta-D-galactopyranoside (ONPG), p-nitrophenyl-beta-D-galactopyranoside (PNPG), 5-bromo-4-chloro-3-indolyl-beta-D-galactopyranoside (X-gal), o-nitrophenyl-beta-D-fucopyranoside, p-nitrophenyl-beta-D-mannoside, o-nitrophenyl-beta-D-glucoside, p-nitrophenyl-beta-D-xyloside, p-nitrophenyl-beta-D-cellobioside, p-nitrophenyl-beta-D-arabinoside, p-nitrophenyl-beta-D-lactoside, p-nitrophenyl-beta-D-galacturonide, p-nitrophenyl-beta-D-glucuronide and p-nitrophenyl-alpha-D-galactoside with highest level of activity with ONPG as substrate, intermediate level of activity with PNPG and lower levels of activity with all other chromogenic nitrophenyl analogs. Able to hydrolyze 34% of milk lactose after 60 minutes at 5 degrees Celsius. This is Beta-galactosidase BgaP from Planococcus sp. (strain L4).